The chain runs to 385 residues: Cytochrome b (385 aa).

4 helical membrane passes run 32–52, 76–98, 113–133, and 179–199; these read FGALAAFCLGIQIVTGIFLAM, WLIRYIHANGASFFFICVYIHVF, LWNLGVTILIVMILTAFLGYV, and FFSLHYLLPFVIALLSLIHVA. Positions 82 and 96 each coordinate heme b. Residues His-183 and His-197 each contribute to the heme b site. An a ubiquinone-binding site is contributed by His-202. 4 helical membrane-spanning segments follow: residues 226–246, 290–310, 322–342, and 349–369; these read FIFKDLLGIIFFLIVFCYAVF, LGGVITLGLALIVLFLLPFIT, SKTILFWSFFSVCVLLGWIGF, and YLMLGQMLTVLYFFYFFSLAV.

Belongs to the cytochrome b family. In terms of assembly, the main subunits of complex b-c1 are: cytochrome b, cytochrome c1 and the Rieske protein. Requires heme b as cofactor.

Its subcellular location is the mitochondrion inner membrane. In terms of biological role, component of the ubiquinol-cytochrome c reductase complex (complex III or cytochrome b-c1 complex) that is part of the mitochondrial respiratory chain. The b-c1 complex mediates electron transfer from ubiquinol to cytochrome c. Contributes to the generation of a proton gradient across the mitochondrial membrane that is then used for ATP synthesis. The polypeptide is Cytochrome b (MT-CYB) (Acanthamoeba castellanii (Amoeba)).